We begin with the raw amino-acid sequence, 309 residues long: MEKILIFGHQNPDTDTICSAIAYADLKNKLGFNAEPVRLGQVNGETQYALDYFKQESPRLVETAANEVNGVILVDHNERQQSIKDIEEVQVLEVIDHHRIANFETAEPLYYRAEPVGCTATILNKMYKENNVKIEKEIAGLMLSAIISDSLLFKSPTCTDQDVAAAKELAEIAGVDAEEYGLNMLKAGADLSKKTVEELISLDAKEFTLGSKKVEIAQVNTVDIEDVKKRQAELEAVISKVVAEKNLDLFLLVITDILENDSLALAIGNEAAKVEKAFNVTLENNTALLKGVVSRKKQVVPVLTDAMAE.

Mn(2+) contacts are provided by His-9, Asp-13, Asp-15, Asp-75, His-97, and Asp-149.

As to quaternary structure, homodimer. Requires Mn(2+) as cofactor.

It is found in the cytoplasm. It carries out the reaction diphosphate + H2O = 2 phosphate + H(+). This Bacillus subtilis (strain 168) protein is Manganese-dependent inorganic pyrophosphatase (ppaC).